Here is a 452-residue protein sequence, read N- to C-terminus: Bone morphogenetic protein 5 (452 aa).

Residues 1–25 (MHWTVFLLRGIVGFLWSGWVQVGYA) form the signal peptide. A propeptide spanning residues 26-314 (KGGLGDNHVH…ASEVLLRSVR (289 aa)) is cleaved from the precursor. Asn-209, Asn-325, Asn-343, and Asn-393 each carry an N-linked (GlcNAc...) asparagine glycan. Positions 316–345 (ASKRKNQNRNKSNSHQDPSRMPSAGDYNTS) are disordered. Disulfide bonds link Cys-351–Cys-417, Cys-380–Cys-449, and Cys-384–Cys-451.

It belongs to the TGF-beta family. As to quaternary structure, interacts with ERFE; the interaction inhibits BMP-induced transcription of HAMP.

Its subcellular location is the secreted. Its function is as follows. Growth factor of the TGF-beta superfamily that plays essential roles in many developmental processes, including cartilage and bone formation or neurogenesis. Initiates the canonical BMP signaling cascade by associating with type I receptor BMPR1A and type II receptor BMPR2. In turn, BMPR1A propagates signal by phosphorylating SMAD1/5/8 that travel to the nucleus and act as activators and repressors of transcription of target genes. Can also signal through non-canonical pathway such as MAPK p38 signaling cascade to promote chondrogenic differentiation. Promotes the expression of HAMP, this is repressed by its interaction with ERFE. This is Bone morphogenetic protein 5 (Bmp5) from Mus musculus (Mouse).